Consider the following 44-residue polypeptide: Antimicrobial peptide 1b (44 aa).

A Chitin-binding type-1 domain is found at 1–42 (AQKCGEQGRGAKCPNCLCCGRYGFCGSTPDYCGVGCQSQCRG). 5 cysteine pairs are disulfide-bonded: C4–C19, C13–C25, C16–C43, C18–C32, and C36–C40.

Post-translationally, contains 5 disulfide bonds.

In terms of biological role, binds chitin. Has antifungal activity against F.oxysporum 16/10 (IC(50)=4.1 uM) and B.sorokiniana 6/10 (IC(50)=2.7 uM). Inhibits germination of fungal spores. The sequence is that of Antimicrobial peptide 1b from Leymus arenarius (Lyme grass).